Reading from the N-terminus, the 541-residue chain is Exopolysaccharide phosphotransferase SCO6021 (541 aa).

This sequence belongs to the stealth family.

This is Exopolysaccharide phosphotransferase SCO6021 from Streptomyces coelicolor (strain ATCC BAA-471 / A3(2) / M145).